Here is a 180-residue protein sequence, read N- to C-terminus: Non-structural protein 4 (180 aa).

2 helical membrane-spanning segments follow: residues 16–36 (VCVHKMTLLIILIISAAVTVI) and 52–72 (IVSTITDGINATIISVMAILG).

The protein localises to the host membrane. The chain is Non-structural protein 4 (Segment-11) from Banna virus (BAV).